Here is a 261-residue protein sequence, read N- to C-terminus: Small ribosomal subunit protein uS2 (261 aa).

Belongs to the universal ribosomal protein uS2 family.

The sequence is that of Small ribosomal subunit protein uS2 from Paracoccus denitrificans (strain Pd 1222).